A 255-amino-acid polypeptide reads, in one-letter code: Pimeloyl-[acyl-carrier protein] methyl ester esterase (255 aa).

Residues 16–242 form the AB hydrolase-1 domain; it reads LVLLHGWGMN…SSHAPFITEP (227 aa). Residues tryptophan 22, 82 to 83, and 143 to 147 each bind substrate; these read SL and FMALQ. Serine 82 serves as the catalytic Nucleophile. Catalysis depends on residues aspartate 207 and histidine 235. Histidine 235 is a substrate binding site.

Belongs to the AB hydrolase superfamily. Carboxylesterase BioH family. As to quaternary structure, monomer.

It is found in the cytoplasm. The enzyme catalyses 6-carboxyhexanoyl-[ACP] methyl ester + H2O = 6-carboxyhexanoyl-[ACP] + methanol + H(+). It participates in cofactor biosynthesis; biotin biosynthesis. Its function is as follows. The physiological role of BioH is to remove the methyl group introduced by BioC when the pimeloyl moiety is complete. It allows to synthesize pimeloyl-ACP via the fatty acid synthetic pathway through the hydrolysis of the ester bonds of pimeloyl-ACP esters. The protein is Pimeloyl-[acyl-carrier protein] methyl ester esterase of Vibrio vulnificus (strain YJ016).